The sequence spans 62 residues: Protein A37.5 homolog (62 aa).

It belongs to the orthopoxviruses A37.5 protein family.

The protein is Protein A37.5 homolog (A40_5R) of Homo sapiens (Human).